A 193-amino-acid chain; its full sequence is Inner membrane protein p54 (193 aa).

Residues 32–52 (YTILIAIVVLVIIIIVLIYLF) form a helical membrane-spanning segment. The disordered stretch occupies residues 84-126 (PQPGTSKPAGATTASVGKPVTGRPATNRPVTDRPATNNPVTDR). Repeat copies occupy residues 135 to 138 (AAAS), 139 to 142 (AAAS), 143 to 146 (AAAS), and 147 to 150 (AAAS). Residues 135–150 (AAASAAASAAASAAAS) are 4 X 4 AA tandem repeats of A-A-A-S. Residues 159-171 (YTTVTTQNTASQT) form an interaction with host DYNLL1 region.

Belongs to the asfivirus envelope protein p54 family. As to quaternary structure, interacts with the host light chain cytoplasmic dynein DYNLL1; this interaction is critical for intracellular microtubule-dependent virus transport toward viral factories.

Its subcellular location is the virion membrane. It localises to the host cytoplasm. The protein localises to the host cytoskeleton. It is found in the host endoplasmic reticulum membrane. Functionally, inner envelope protein involved, through its interaction with host dynein, in the intracellular microtubule-dependent transport of viral capsid toward viral factories. Seems to induce caspase-3 activation and apoptosis. Plays a role in virion morphogenesis by recruiting and transforming the host ER membranes into the precursors of the viral envelope. Involved in virus attachment to the host cell. The polypeptide is Inner membrane protein p54 (Ornithodoros (relapsing fever ticks)).